Reading from the N-terminus, the 220-residue chain is UPF0502 protein Pnap_3223 (220 aa).

It belongs to the UPF0502 family.

The polypeptide is UPF0502 protein Pnap_3223 (Polaromonas naphthalenivorans (strain CJ2)).